The following is a 172-amino-acid chain: RNA silencing suppressor p19 (172 aa).

The segment covering 1–20 has biased composition (basic and acidic residues); that stretch reads MERAIQGNDAREQANSERWD. Residues 1–38 are disordered; the sequence is MERAIQGNDAREQANSERWDGGSGSSTSPFQLPDESPS.

It belongs to the tombusvirus protein p19 family. In terms of assembly, homodimer.

In terms of biological role, viral suppressor of RNA silencing which binds specifically to silencing RNAs (siRNAs). Acts as a molecular caliper to specifically select siRNAs based on the length of the duplex region of the RNA. The sequence is that of RNA silencing suppressor p19 from Tomato bushy stunt virus (strain type) (TBSV).